The chain runs to 445 residues: 4-hydroxyphenylpyruvate dioxygenase (445 aa).

A compositionally biased stretch (polar residues) spans 1-11 (MGHQNAAVSEN). The interval 1 to 20 (MGHQNAAVSENQNHDDGAAS) is disordered. 2 consecutive VOC domains span residues 46-192 (RFHH…YVSY) and 223-383 (RLDH…IFTK). Residues His226, His308, and Glu394 each contribute to the Fe cation site.

The protein belongs to the 4HPPD family. In terms of assembly, homodimer. Fe cation serves as cofactor.

The protein localises to the cytoplasm. It carries out the reaction 3-(4-hydroxyphenyl)pyruvate + O2 = homogentisate + CO2. Its pathway is amino-acid degradation; L-phenylalanine degradation; acetoacetate and fumarate from L-phenylalanine: step 3/6. The protein operates within cofactor biosynthesis; prenylquinone biosynthesis. Its function is as follows. Catalyzes the conversion of 4-hydroxyphenylpyruvic acid to homogentisic acid, one of the steps in tyrosine catabolism. This chain is 4-hydroxyphenylpyruvate dioxygenase (HPD), found in Arabidopsis thaliana (Mouse-ear cress).